The sequence spans 253 residues: MSESPYKSGTTHFGFRDVAAKDKQKLVGQVFTSVARNYDLMNDLMSMGVHRAWKRYYVATAQVKPGDRVLDLAGGTGDIAALLKERVGVEGSVVLGDINAGMLSVGRDRLTNRGLVLGLDYVQCNAEALPFPDNSFDLVTIAFGLRNVTDKDAGLREMYRVLKVGGQARVLEFSEVTADWFKPIYDFHSFKILPKLGKLFANDSDSYQYLAESIRKHPPQEELKAMMGQAGFERCHYKNLTGGIVSIHSGYKL.

S-adenosyl-L-methionine-binding positions include Thr-76, Asp-97, and Asn-125 to Ala-126.

This sequence belongs to the class I-like SAM-binding methyltransferase superfamily. MenG/UbiE family.

It catalyses the reaction a 2-demethylmenaquinol + S-adenosyl-L-methionine = a menaquinol + S-adenosyl-L-homocysteine + H(+). It carries out the reaction a 2-methoxy-6-(all-trans-polyprenyl)benzene-1,4-diol + S-adenosyl-L-methionine = a 5-methoxy-2-methyl-3-(all-trans-polyprenyl)benzene-1,4-diol + S-adenosyl-L-homocysteine + H(+). Its pathway is quinol/quinone metabolism; menaquinone biosynthesis; menaquinol from 1,4-dihydroxy-2-naphthoate: step 2/2. The protein operates within cofactor biosynthesis; ubiquinone biosynthesis. Functionally, methyltransferase required for the conversion of demethylmenaquinol (DMKH2) to menaquinol (MKH2) and the conversion of 2-polyprenyl-6-methoxy-1,4-benzoquinol (DDMQH2) to 2-polyprenyl-3-methyl-6-methoxy-1,4-benzoquinol (DMQH2). This Stenotrophomonas maltophilia (strain R551-3) protein is Ubiquinone/menaquinone biosynthesis C-methyltransferase UbiE.